The chain runs to 134 residues: Small ribosomal subunit protein uS11 (134 aa).

Belongs to the universal ribosomal protein uS11 family. Part of the 30S ribosomal subunit. Interacts with proteins S7 and S18. Binds to IF-3.

Located on the platform of the 30S subunit, it bridges several disparate RNA helices of the 16S rRNA. Forms part of the Shine-Dalgarno cleft in the 70S ribosome. The protein is Small ribosomal subunit protein uS11 of Frankia alni (strain DSM 45986 / CECT 9034 / ACN14a).